The primary structure comprises 454 residues: Bifunctional protein GlmU (454 aa).

Residues 1–226 are pyrophosphorylase; sequence MALNVVILAA…AIEVEGANNR (226 aa). Residues 8-11, Lys22, Gln73, 78-79, 100-102, Gly137, Glu151, Asn166, and Asn224 contribute to the UDP-N-acetyl-alpha-D-glucosamine site; these read LAAG, GT, and YGD. Residue Asp102 coordinates Mg(2+). Asn224 is a Mg(2+) binding site. The tract at residues 227–247 is linker; it reads VQLAQLERAYQAREAEKLMIA. The segment at 248–454 is N-acetyltransferase; sequence GANLRDPSRI…GWQRPVKIKK (207 aa). Arg330 and Lys348 together coordinate UDP-N-acetyl-alpha-D-glucosamine. Residue His360 is the Proton acceptor of the active site. The UDP-N-acetyl-alpha-D-glucosamine site is built by Tyr363 and Asn374. Residues Ala377, 383–384, Ser402, Ala420, and Arg437 contribute to the acetyl-CoA site; that span reads NY.

This sequence in the N-terminal section; belongs to the N-acetylglucosamine-1-phosphate uridyltransferase family. In the C-terminal section; belongs to the transferase hexapeptide repeat family. As to quaternary structure, homotrimer. Requires Mg(2+) as cofactor.

The protein localises to the cytoplasm. It catalyses the reaction alpha-D-glucosamine 1-phosphate + acetyl-CoA = N-acetyl-alpha-D-glucosamine 1-phosphate + CoA + H(+). The enzyme catalyses N-acetyl-alpha-D-glucosamine 1-phosphate + UTP + H(+) = UDP-N-acetyl-alpha-D-glucosamine + diphosphate. The protein operates within nucleotide-sugar biosynthesis; UDP-N-acetyl-alpha-D-glucosamine biosynthesis; N-acetyl-alpha-D-glucosamine 1-phosphate from alpha-D-glucosamine 6-phosphate (route II): step 2/2. Its pathway is nucleotide-sugar biosynthesis; UDP-N-acetyl-alpha-D-glucosamine biosynthesis; UDP-N-acetyl-alpha-D-glucosamine from N-acetyl-alpha-D-glucosamine 1-phosphate: step 1/1. It participates in bacterial outer membrane biogenesis; LPS lipid A biosynthesis. Catalyzes the last two sequential reactions in the de novo biosynthetic pathway for UDP-N-acetylglucosamine (UDP-GlcNAc). The C-terminal domain catalyzes the transfer of acetyl group from acetyl coenzyme A to glucosamine-1-phosphate (GlcN-1-P) to produce N-acetylglucosamine-1-phosphate (GlcNAc-1-P), which is converted into UDP-GlcNAc by the transfer of uridine 5-monophosphate (from uridine 5-triphosphate), a reaction catalyzed by the N-terminal domain. The chain is Bifunctional protein GlmU from Shewanella oneidensis (strain ATCC 700550 / JCM 31522 / CIP 106686 / LMG 19005 / NCIMB 14063 / MR-1).